The chain runs to 313 residues: Ornithine carbamoyltransferase (313 aa).

Carbamoyl phosphate contacts are provided by residues 57-60 (STRT), Q84, R108, and 135-138 (HPTQ). L-ornithine is bound by residues N167, D231, and 235 to 236 (SM). Carbamoyl phosphate contacts are provided by residues 272–273 (CL) and R300.

This sequence belongs to the aspartate/ornithine carbamoyltransferase superfamily. OTCase family.

The protein resides in the cytoplasm. It catalyses the reaction carbamoyl phosphate + L-ornithine = L-citrulline + phosphate + H(+). Its pathway is amino-acid biosynthesis; L-arginine biosynthesis; L-arginine from L-ornithine and carbamoyl phosphate: step 1/3. Its function is as follows. Reversibly catalyzes the transfer of the carbamoyl group from carbamoyl phosphate (CP) to the N(epsilon) atom of ornithine (ORN) to produce L-citrulline. In Pseudothermotoga lettingae (strain ATCC BAA-301 / DSM 14385 / NBRC 107922 / TMO) (Thermotoga lettingae), this protein is Ornithine carbamoyltransferase.